The chain runs to 205 residues: Small ribosomal subunit protein uS4 (205 aa).

A disordered region spans residues 1–46 (MSKRASSKYKIDRRMGENIWGRPKSPVNRREYGPGQHGQRRKGKLS). An S4 RNA-binding domain is found at 94-154 (SRLDAIVYRA…QKSKQLAIVL (61 aa)).

It belongs to the universal ribosomal protein uS4 family. Part of the 30S ribosomal subunit. Contacts protein S5. The interaction surface between S4 and S5 is involved in control of translational fidelity.

Functionally, one of the primary rRNA binding proteins, it binds directly to 16S rRNA where it nucleates assembly of the body of the 30S subunit. Its function is as follows. With S5 and S12 plays an important role in translational accuracy. The polypeptide is Small ribosomal subunit protein uS4 (Allorhizobium ampelinum (strain ATCC BAA-846 / DSM 112012 / S4) (Agrobacterium vitis (strain S4))).